We begin with the raw amino-acid sequence, 102 residues long: Matrix Gla protein (102 aa).

Residues S2, S3, and S5 each carry the phosphoserine modification. The segment at 18-45 (DANSFMRQPRPPNHWDSRDRFKSPRERT) is disordered. The Gla domain maps to 27–73 (RPPNHWDSRDRFKSPRERTREKCEEYRPCERLARQVGLKRAYGKYFG). Basic and acidic residues predominate over residues 30–45 (NHWDSRDRFKSPRERT). E43, E47, E50, and E51 each carry 4-carboxyglutamate. C49 and C55 form a disulfide bridge. A disordered region spans residues 72-102 (FGNRRQRPSTSGRLRPRKYRASRYRNHHYRY). Positions 85–102 (LRPRKYRASRYRNHHYRY) are enriched in basic residues.

This sequence belongs to the osteocalcin/matrix Gla protein family. In terms of processing, requires vitamin K-dependent gamma-carboxylation for its function. In terms of tissue distribution, accounts for 35-40% of the total protein in the acid demineralization extract of calcified cartilage.

The protein localises to the secreted. Its function is as follows. Associates with the organic matrix of calcified cartilage. The sequence is that of Matrix Gla protein (mgp) from Galeorhinus galeus (Tope shark).